The sequence spans 124 residues: Small ribosomal subunit protein uS12 (124 aa).

3-methylthioaspartic acid is present on D90.

The protein belongs to the universal ribosomal protein uS12 family. As to quaternary structure, part of the 30S ribosomal subunit. Contacts proteins S8 and S17. May interact with IF1 in the 30S initiation complex.

In terms of biological role, with S4 and S5 plays an important role in translational accuracy. Interacts with and stabilizes bases of the 16S rRNA that are involved in tRNA selection in the A site and with the mRNA backbone. Located at the interface of the 30S and 50S subunits, it traverses the body of the 30S subunit contacting proteins on the other side and probably holding the rRNA structure together. The combined cluster of proteins S8, S12 and S17 appears to hold together the shoulder and platform of the 30S subunit. This Wolbachia sp. subsp. Brugia malayi (strain TRS) protein is Small ribosomal subunit protein uS12.